The chain runs to 295 residues: Hydroxyquinol 1,2-dioxygenase (295 aa).

Tyr165, Tyr200, His224, and His226 together coordinate Fe cation.

Belongs to the intradiol ring-cleavage dioxygenase family. The cofactor is Fe(3+).

It catalyses the reaction benzene-1,2,4-triol + O2 = maleylacetate + 2 H(+). It participates in aromatic compound metabolism. Its function is as follows. Involved in the gamma-resorcylate (2,6-dihydroxybenzoate) catabolism. Catalyzes the conversion of hydroxyquinol to malelylacetate. The sequence is that of Hydroxyquinol 1,2-dioxygenase from Rhizobium sp. (strain MTP-10005).